Here is a 447-residue protein sequence, read N- to C-terminus: UPF0210 protein Lreu_0940 (447 aa).

This sequence belongs to the UPF0210 family. As to quaternary structure, homodimer.

In Limosilactobacillus reuteri (strain DSM 20016) (Lactobacillus reuteri), this protein is UPF0210 protein Lreu_0940.